The chain runs to 276 residues: Aspartate dehydrogenase domain-containing protein (276 aa).

This sequence belongs to the L-aspartate dehydrogenase family.

The sequence is that of Aspartate dehydrogenase domain-containing protein (aspdh) from Danio rerio (Zebrafish).